Here is a 141-residue protein sequence, read N- to C-terminus: Arsenate reductase (141 aa).

Catalysis depends on Cys12, which acts as the Nucleophile; cysteine thioarsenate intermediate.

The protein belongs to the ArsC family.

The enzyme catalyses [glutaredoxin]-dithiol + arsenate + glutathione + H(+) = glutathionyl-S-S-[glutaredoxin] + arsenite + H2O. In terms of biological role, involved in resistance to arsenate. Catalyzes the reduction of arsenate [As(V)] to arsenite [As(III)]. The polypeptide is Arsenate reductase (Escherichia coli).